The primary structure comprises 239 residues: 2,3,4,5-tetrahydropyridine-2,6-dicarboxylate N-acetyltransferase (239 aa).

The protein belongs to the transferase hexapeptide repeat family. DapH subfamily.

It carries out the reaction (S)-2,3,4,5-tetrahydrodipicolinate + acetyl-CoA + H2O = L-2-acetamido-6-oxoheptanedioate + CoA. The protein operates within amino-acid biosynthesis; L-lysine biosynthesis via DAP pathway; LL-2,6-diaminopimelate from (S)-tetrahydrodipicolinate (acetylase route): step 1/3. Functionally, catalyzes the transfer of an acetyl group from acetyl-CoA to tetrahydrodipicolinate. The protein is 2,3,4,5-tetrahydropyridine-2,6-dicarboxylate N-acetyltransferase of Staphylococcus saprophyticus subsp. saprophyticus (strain ATCC 15305 / DSM 20229 / NCIMB 8711 / NCTC 7292 / S-41).